The sequence spans 822 residues: von Willebrand factor A domain-containing protein 5A (822 aa).

Residues 1-131 enclose the VIT domain; sequence MEHHWGLITG…KVAVTLRYVQ (131 aa). The region spanning 281–469 is the VWFA domain; sequence EFVFLMDRSG…LALQCALDDI (189 aa). Residues 657–682 are disordered; it reads SMPSPAPIENQGVADSSNEKSNSQNE. The span at 669-680 shows a compositional bias: polar residues; the sequence is VADSSNEKSNSQ.

Functionally, may play a role in tumorigenesis as a tumor suppressor. Altered expression of this protein and disruption of the molecular pathway it is involved in may contribute directly to or modify tumorigenesis. The sequence is that of von Willebrand factor A domain-containing protein 5A (Vwa5a) from Rattus norvegicus (Rat).